The chain runs to 261 residues: Adenosylcobinamide-GDP ribazoletransferase (261 aa).

The next 7 membrane-spanning stretches (helical) occupy residues 9–29 (LELFLLAVSFFSRIPVPVSLP), 41–61 (YFALVGLLLGAICALVYSLAT), 64–84 (FSTNISVFLTMVLSLLLTGAF), 114–134 (IGTYGSSALIMVLLGKYLLLT), 141–161 (SLVPVWLLAYTLSRAVAASLI), 196–216 (ATLLYFSWQFIGVMIAASLIF), and 235–255 (CLGAAQQLMEILIYLILLAFL).

Belongs to the CobS family. Requires Mg(2+) as cofactor.

The protein localises to the cell inner membrane. It catalyses the reaction alpha-ribazole + adenosylcob(III)inamide-GDP = adenosylcob(III)alamin + GMP + H(+). The enzyme catalyses alpha-ribazole 5'-phosphate + adenosylcob(III)inamide-GDP = adenosylcob(III)alamin 5'-phosphate + GMP + H(+). It participates in cofactor biosynthesis; adenosylcobalamin biosynthesis; adenosylcobalamin from cob(II)yrinate a,c-diamide: step 7/7. In terms of biological role, joins adenosylcobinamide-GDP and alpha-ribazole to generate adenosylcobalamin (Ado-cobalamin). Also synthesizes adenosylcobalamin 5'-phosphate from adenosylcobinamide-GDP and alpha-ribazole 5'-phosphate. This chain is Adenosylcobinamide-GDP ribazoletransferase, found in Vibrio cholerae serotype O1 (strain ATCC 39541 / Classical Ogawa 395 / O395).